Here is a 430-residue protein sequence, read N- to C-terminus: Adenylosuccinate synthetase (430 aa).

GTP is bound by residues 12-18 (GDEGKGK) and 40-42 (GHT). Asp13 acts as the Proton acceptor in catalysis. Residues Asp13 and Gly40 each coordinate Mg(2+). IMP-binding positions include 13 to 16 (DEGK), 38 to 41 (NAGH), Thr128, Arg142, Gln223, Thr238, and Arg302. The active-site Proton donor is His41. 298-304 (TTTGRPR) is a binding site for substrate. GTP is bound by residues Arg304, 330-332 (SID), and 413-415 (SVG).

The protein belongs to the adenylosuccinate synthetase family. Homodimer. It depends on Mg(2+) as a cofactor.

The protein localises to the cytoplasm. It carries out the reaction IMP + L-aspartate + GTP = N(6)-(1,2-dicarboxyethyl)-AMP + GDP + phosphate + 2 H(+). The protein operates within purine metabolism; AMP biosynthesis via de novo pathway; AMP from IMP: step 1/2. In terms of biological role, plays an important role in the de novo pathway of purine nucleotide biosynthesis. Catalyzes the first committed step in the biosynthesis of AMP from IMP. In Lactococcus lactis subsp. cremoris (strain SK11), this protein is Adenylosuccinate synthetase.